The chain runs to 1711 residues: Protein chiffon (1711 aa).

Disordered regions lie at residues 1–31 (MQPQ…AATP), 87–129 (KPEV…SRAD), and 244–307 (TKSK…IDSS). The segment at 1-400 (MQPQSDKQSA…PALREKSKRI (400 aa)) is sufficient for interaction with and activation of Cdc7. 2 stretches are compositionally biased toward low complexity: residues 10–30 (ASRL…TAAT) and 97–109 (TPGT…TPTS). S306 and S307 each carry phosphoserine. The DBF4-type zinc-finger motif lies at 307–356 (SEKQGGVCEICKLEYDILNIHLQSKDHELFAKNSDNFLALDTLIQSSADV). Zn(2+)-binding residues include C314, C317, H327, and H333. The span at 365-378 (VESELDMDVDESLS) shows a compositional bias: acidic residues. 11 disordered regions span residues 365-507 (VESE…DSPS), 531-647 (MFPR…KPQL), 733-771 (LDEE…REQR), 791-817 (TEVK…KVKQ), 908-945 (QDKG…YKNK), 1005-1025 (RSTS…CRNK), 1055-1157 (QRQD…RNQS), 1271-1290 (ESEG…PPTD), 1303-1329 (MGSA…RMSN), 1343-1370 (LKSN…ALPD), and 1383-1644 (LHPI…SKYA). Phosphoserine occurs at positions 406, 407, 417, 432, and 435. Over residues 429–439 (QGNSPGSLSEL) the composition is skewed to polar residues. Residues 445 to 454 (PTTAAATPTT) show a composition bias toward low complexity. S467 is modified (phosphoserine). The segment at residues 493–505 (PRGRGRPPNQVDS) is a DNA-binding region (a.T hook). Residues 537–546 (VPTTRSSSEL) are compositionally biased toward polar residues. S542, S543, and S544 each carry phosphoserine. Basic and acidic residues predominate over residues 549-560 (DVDRQTTSDVRG). Residues 563-575 (SISSASLDTSTSE) show a composition bias toward low complexity. The span at 588-601 (IRKRAQAVGRRRKV) shows a compositional bias: basic residues. Residues 793-812 (VKTSPSKSRTKIQKPSSPTK) show a composition bias toward polar residues. Residues 908-932 (QDKGEQIKLEDQKPAPKKEVKKEEE) show a composition bias toward basic and acidic residues. Over residues 1006–1018 (STSSSSCSNSQRS) the composition is skewed to low complexity. T1081 is modified (phosphothreonine). Phosphoserine occurs at positions 1091 and 1092. Positions 1092–1101 (SPRTTRSQAA) are enriched in polar residues. The span at 1398-1407 (TTTTTTTTTT) shows a compositional bias: low complexity. The interval 1400-1695 (TTTTTTTTSA…NAWRRTQRRA (296 aa)) is sufficient for interaction with Gcn5. Residues 1435–1445 (ADDKQNSREDA) show a composition bias toward basic and acidic residues. Acidic residues-rich tracts occupy residues 1453 to 1475 (DVDE…DETM) and 1483 to 1518 (QDVE…EEQD). 2 stretches are compositionally biased toward polar residues: residues 1536–1545 (ISVTTPPEDS) and 1556–1591 (HNGQ…SCIS).

As to quaternary structure, component of the Dbf4-dependent kinase (DDK) complex consisting of Cdc7 and the Dbf4 ortholog chif. Interacts with Cdc7; the interaction is direct. Interacts with CG5790. In terms of assembly, component of the Chiffon histone acetyltransferase (CHAT) complex consisting of Ada3, Sgf29, Gcn5, chif/chiffon and Ada2b (Isoform A). Interacts (via C-terminus) with Gcn5; the interaction is direct but weak in the absence of other CHAT components. May be proteolytically cleaved to produce a N-terminal 50 kDa product.

It is found in the nucleus. A bicistronic gene producing two proteins that are components of different complexes and have separate properties and functions. Full-length protein is proteolytically cleaved, producing a ~50kDa N-terminal product (Chiffon-A) that forms part of the DDK complex; it is unclear if the C-terminal proteolytic product is stable or functional. Alternative initiation from an internal ribosome entry site produces a C-terminal ~48kDa product (Chiffon-B or Isoform E) that forms part of the CHAT complex. Involved in regulation of gene expression during embryonic development. In terms of biological role, regulatory component of the Dbf4-dependent kinase (DDK) complex. Required for the amplification stage, but not the preceding endoreplication stage of DNA replication in egg chamber follicle cells of the ovary. May be involved in initiation of DNA replication; activation of the chorion gene origins. May have a role in eye and thoracic bristle development. Required for female fertility; is not required for oogenesis but is required maternally for early embryo development. Functionally, component of the CHAT histone acetyltransferase complex, which predominantly acetylates histone H3. As part of the CHAT complex involved in acetylation of histone H3 on 'Lys-10' (H3K9ac), 'Lys-15' (H3K14ac) and 'Lys-19' (H3K18ac), but not 'Lys-25' (H3K24ac). May also regulate other histone acetyltransferase complexes. Essential for viability. Not required for early stages of embryonic development. May be involved in zygotic genome activation during embryogenesis. In Drosophila melanogaster (Fruit fly), this protein is Protein chiffon.